The following is a 729-amino-acid chain: Polyribonucleotide nucleotidyltransferase (729 aa).

Residues aspartate 509 and aspartate 515 each contribute to the Mg(2+) site. Residues 575–634 (PRVISVKIPVDKIGEVIGPKGKMINQIQADSGAEITVEDDGTIYIGAVDGPSAESARSAI) form the KH domain. Residues 646 to 718 (GERYLGTIVK…SRGKISLSPS (73 aa)) form the S1 motif domain.

Belongs to the polyribonucleotide nucleotidyltransferase family. The cofactor is Mg(2+).

It localises to the cytoplasm. The catalysed reaction is RNA(n+1) + phosphate = RNA(n) + a ribonucleoside 5'-diphosphate. In terms of biological role, involved in mRNA degradation. Catalyzes the phosphorolysis of single-stranded polyribonucleotides processively in the 3'- to 5'-direction. This Frankia casuarinae (strain DSM 45818 / CECT 9043 / HFP020203 / CcI3) protein is Polyribonucleotide nucleotidyltransferase.